We begin with the raw amino-acid sequence, 553 residues long: MPHFNPVPVSNKKFVFDDFILNMDGSLLRSEKKVNIPPKEYAVLVILLEAAGKIVSKNTLLDQVWGDAEVNEESLTRCIYALRRILSEDKEHRYIETLYGQGYRFNRPVVVVSPPAPQPTTHTLAILPFQMQDQVQSESLHYSIVKGLSQYAPFGLSVLPVTITKNCRSVKDILELMDQLRPDYYISGQMIPDGNDNIVQIEIVRVKGYHLLHQESIKLIEHQPASLLQNKIANLLLRCIPGLRWDTKQISELNSIDSTMVYLRGKHELNQYTPYSLQQALKLLTQCVNMSPNSIAPYCALAECYLSMAQMGIFDKQNAMIKAKEHAIKATELDHNNPQALGLLGLINTIHSEYIVGSLLFKQANLLSPISADIKYYYGWNLFMAGQLEEALQTINECLKLDPTRAAAGITKLWITYYHTGIDDAIRLGDELRSQHLQDNPILLSMQVMFLSLKGKHELARKLTKEISTQEITGLIAVNLLYAEYCQNSERALPTIREFLESEQRIDNNPGLLPLVLVAHGEAIAEKMWNKFKNEDNIWFKRWKQDPRLIKLR.

Residues 11–107 constitute a DNA-binding region (ompR/PhoB-type); the sequence is NKKFVFDDFI…LYGQGYRFNR (97 aa). 4-aspartylphosphate is present on D62. The stretch at 372 to 405 is one TPR repeat; the sequence is ADIKYYYGWNLFMAGQLEEALQTINECLKLDPTR.

Its function is as follows. The main transcriptional regulator of the Salmonella pathogenicity island 1 (SPI1) gene expression. Activates the expression of invasion genes by a direct action at their promoters and also indirectly by increasing the level of invF. Also binds upstream of prgH and directly activates the expression of prgHIJK operon. The sequence is that of Transcriptional regulator HilA (hilA) from Salmonella typhi.